The chain runs to 359 residues: uncharacterized protein (359 aa).

Disordered regions lie at residues 90–117 (QESPVRGMSPAPNGAKVPPRPHSEPSRK), 132–161 (IKKEEIKAKRPPSPPKACSTPGSCSSGMTS), and 235–359 (TSME…THRR). Residues 151–161 (TPGSCSSGMTS) show a composition bias toward polar residues. A compositionally biased stretch (low complexity) spans 245-259 (KPPTVKSPPTVKLPP). The span at 286 to 299 (EENKEVPKEAEHKP) shows a compositional bias: basic and acidic residues.

This is an uncharacterized protein from Homo sapiens (Human).